The following is a 412-amino-acid chain: L-threonine:uridine-5'-aldehyde transaldolase (412 aa).

N6-(pyridoxal phosphate)lysine is present on K229.

The protein belongs to the SHMT family. Pyridoxal 5'-phosphate is required as a cofactor.

It carries out the reaction uridine-5'-aldehyde + L-threonine = (5'S,6'S)-C-glycyluridine + acetaldehyde. The protein operates within antibiotic biosynthesis. Its function is as follows. Transaldolase involved in the biosynthesis of the capuramycin-type nucleoside antibiotic A-102395. Catalyzes the condensation of L-threonine and uridine-5'-aldehyde to form 5'-C-glycyluridine (GlyU). This is L-threonine:uridine-5'-aldehyde transaldolase from Amycolatopsis sp.